The primary structure comprises 76 residues: MSRFFRRRKFCRFTAERVTEIDYKDTVTLKNYITESGKIVPSRITGTRAKYQRQLARAIKRARYLALLPYTDLHNK.

It belongs to the bacterial ribosomal protein bS18 family. In terms of assembly, part of the 30S ribosomal subunit. Forms a tight heterodimer with protein bS6.

Functionally, binds as a heterodimer with protein bS6 to the central domain of the 16S rRNA, where it helps stabilize the platform of the 30S subunit. The chain is Small ribosomal subunit protein bS18 from Tolumonas auensis (strain DSM 9187 / NBRC 110442 / TA 4).